Here is a 182-residue protein sequence, read N- to C-terminus: Large ribosomal subunit protein uL6 (182 aa).

The protein belongs to the universal ribosomal protein uL6 family. Part of the 50S ribosomal subunit.

In terms of biological role, this protein binds to the 23S rRNA, and is important in its secondary structure. It is located near the subunit interface in the base of the L7/L12 stalk, and near the tRNA binding site of the peptidyltransferase center. This chain is Large ribosomal subunit protein uL6, found in Caldicellulosiruptor saccharolyticus (strain ATCC 43494 / DSM 8903 / Tp8T 6331).